The chain runs to 89 residues: Small ribosomal subunit protein uS15 (89 aa).

Belongs to the universal ribosomal protein uS15 family. In terms of assembly, part of the 30S ribosomal subunit. Forms a bridge to the 50S subunit in the 70S ribosome, contacting the 23S rRNA.

Functionally, one of the primary rRNA binding proteins, it binds directly to 16S rRNA where it helps nucleate assembly of the platform of the 30S subunit by binding and bridging several RNA helices of the 16S rRNA. In terms of biological role, forms an intersubunit bridge (bridge B4) with the 23S rRNA of the 50S subunit in the ribosome. The polypeptide is Small ribosomal subunit protein uS15 (Photobacterium profundum (strain SS9)).